The following is a 354-amino-acid chain: Probable cinnamyl alcohol dehydrogenase 1 (354 aa).

Cys47, His69, Glu70, Cys100, Cys103, Cys106, Cys114, and Cys163 together coordinate Zn(2+). Residues Thr167, 188–193, 211–216, Thr251, and 297–299 contribute to the NADP(+) site; these read GLGGLG, STSESK, and SVT.

The protein belongs to the zinc-containing alcohol dehydrogenase family. As to quaternary structure, homodimer. Zn(2+) is required as a cofactor.

It catalyses the reaction (E)-cinnamyl alcohol + NADP(+) = (E)-cinnamaldehyde + NADPH + H(+). The catalysed reaction is (E)-coniferol + NADP(+) = (E)-coniferaldehyde + NADPH + H(+). It carries out the reaction (E)-sinapyl alcohol + NADP(+) = (E)-sinapaldehyde + NADPH + H(+). The enzyme catalyses (E)-4-coumaroyl alcohol + NADP(+) = (E)-4-coumaraldehyde + NADPH + H(+). It catalyses the reaction (E)-caffeyl alcohol + NADP(+) = (E)-caffeyl aldehyde + NADPH + H(+). Its pathway is aromatic compound metabolism; phenylpropanoid biosynthesis. Functionally, involved in lignin biosynthesis. Catalyzes the final step specific for the production of lignin monomers. Catalyzes the NADPH-dependent reduction of coniferaldehyde, 5-hydroxyconiferaldehyde, sinapaldehyde, 4-coumaraldehyde and caffeyl aldehyde to their respective alcohols. This is Probable cinnamyl alcohol dehydrogenase 1 from Oryza sativa subsp. japonica (Rice).